Consider the following 389-residue polypeptide: Large ribosomal subunit protein uL3 (389 aa).

It belongs to the universal ribosomal protein uL3 family.

It is found in the cytoplasm. The polypeptide is Large ribosomal subunit protein uL3 (RPL3) (Debaryomyces hansenii (strain ATCC 36239 / CBS 767 / BCRC 21394 / JCM 1990 / NBRC 0083 / IGC 2968) (Yeast)).